The sequence spans 549 residues: uncharacterized protein (549 aa).

The first 19 residues, 1-19 (MNWRRIVWLLALVTLPTLA), serve as a signal peptide directing secretion.

This is an uncharacterized protein from Escherichia coli (strain K12).